The following is a 437-amino-acid chain: Vacuolar protein sorting-associated protein 4A (437 aa).

The segment at 1-84 (MTTSTLQKAI…RSKEKHGKKP (84 aa)) is interaction with CHMP1B. Residues 2–80 (TTSTLQKAID…KDYLRSKEKH (79 aa)) enclose the MIT domain. At K8 the chain carries N6-acetyllysine. The interval 75–106 (RSKEKHGKKPVKENQSEGKGSDSDSEGDNPEK) is disordered. Over residues 84 to 96 (PVKENQSEGKGSD) the composition is skewed to basic and acidic residues. A phosphoserine mark is found at S95 and S97. Position 167-174 (167-174 (GPPGTGKS)) interacts with ATP.

Belongs to the AAA ATPase family. Proposed to be monomeric or homodimeric in nucleotide-free form and to oligomerize upon binding to ATP to form two stacked hexameric or heptameric rings with a central pore through which ESCRT-III substrates are translocated in an ATP-dependent manner. Interacts with CHMP1A, CHMP1B, CHMP2A, CHMP2B, CHMP3, CHMP4A, CHMP4B, CHMP4C and CHMP6. Interacts with VPS4B; the interaction suggests a heteromeric assembly with VPS4B. Interacts with SPAST. Interacts with IST1. Interacts with ZFYVE19/ANCHR; leading to retain it at midbody. In terms of tissue distribution, ubiquitously expressed.

The protein localises to the late endosome membrane. It is found in the midbody. The protein resides in the cytoplasm. It localises to the cytoskeleton. Its subcellular location is the spindle. It carries out the reaction ATP + H2O = ADP + phosphate + H(+). Functionally, involved in late steps of the endosomal multivesicular bodies (MVB) pathway. Recognizes membrane-associated ESCRT-III assemblies and catalyzes their disassembly, possibly in combination with membrane fission. Redistributes the ESCRT-III components to the cytoplasm for further rounds of MVB sorting. MVBs contain intraluminal vesicles (ILVs) that are generated by invagination and scission from the limiting membrane of the endosome and mostly are delivered to lysosomes enabling degradation of membrane proteins, such as stimulated growth factor receptors, lysosomal enzymes and lipids. It is required for proper accomplishment of various processes including the regulation of endosome size, primary cilium organization, mitotic spindle organization, chromosome segregation, and nuclear envelope sealing and spindle disassembly during anaphase. Involved in cytokinesis: retained at the midbody by ZFYVE19/ANCHR and CHMP4C until abscission checkpoint signaling is terminated at late cytokinesis. It is then released following dephosphorylation of CHMP4C, leading to abscission. VPS4A/B are required for the exosomal release of SDCBP, CD63 and syndecan. Critical for normal erythroblast cytokinesis and correct erythropoiesis. In terms of biological role, (Microbial infection) In conjunction with the ESCRT machinery also appears to function in topologically equivalent membrane fission events, such as the terminal stages of cytokinesis and enveloped virus budding (HIV-1 and other lentiviruses). This is Vacuolar protein sorting-associated protein 4A from Homo sapiens (Human).